A 451-amino-acid polypeptide reads, in one-letter code: MFLGEDYLLTNRAAVRLFNEVKDLPIVDPHNHLDAKDIVENKPWSDIWEVEGATDHYVWELMRRCGISEEYITGSRSNKEKWLALAKVFPRFVGNPTYEWIHLDLWRRFNIKKVISEETAEEIWEETKKKLPEMTPQKLLRDMKVEILCTTDDPVSTLEHHRKAKEVVEGVTILPTWRPDRAMNVDKEGWKEYVEKMGERYGEDTSTLEGFLSALWKSHEHFKEHGCVASDHALLEPSVYYVDENRARAVHEKAFSGEKLTQDEINDYKAFMMIQFGKMNQETNWVTQLHIGALRDYRDSLFKTLGPDSGGDISTNFLRIAEGLRYFLNEFDGKLKIVLYVLDPTHLPTIATIARAFPNVYVGAPWWFNDSPFGMEMHLKYLASVDLLYNLAGMVTDSRKLLSFGSRTEMFRRVLSNVVGEMVEKGQIPIKEARELVKHVSYDGPKSLFFR.

Belongs to the metallo-dependent hydrolases superfamily. Uronate isomerase family.

It catalyses the reaction D-glucuronate = D-fructuronate. The enzyme catalyses aldehydo-D-galacturonate = keto-D-tagaturonate. The protein operates within carbohydrate metabolism; pentose and glucuronate interconversion. The sequence is that of Uronate isomerase from Thermotoga sp. (strain RQ2).